Here is a 57-residue protein sequence, read N- to C-terminus: uncharacterized protein (57 aa).

Residues 24-44 (LWVTLLLTMFFTAVEIIGGLI) traverse the membrane as a helical segment.

It to cation A.eutrophus efflux system protein CzcD.

The protein resides in the cell membrane. This is an uncharacterized protein from Bacillus caldolyticus.